The sequence spans 352 residues: Phosphoribosylformylglycinamidine cyclo-ligase (352 aa).

Belongs to the AIR synthase family.

It localises to the cytoplasm. It catalyses the reaction 2-formamido-N(1)-(5-O-phospho-beta-D-ribosyl)acetamidine + ATP = 5-amino-1-(5-phospho-beta-D-ribosyl)imidazole + ADP + phosphate + H(+). It functions in the pathway purine metabolism; IMP biosynthesis via de novo pathway; 5-amino-1-(5-phospho-D-ribosyl)imidazole from N(2)-formyl-N(1)-(5-phospho-D-ribosyl)glycinamide: step 2/2. The protein is Phosphoribosylformylglycinamidine cyclo-ligase of Teredinibacter turnerae (strain ATCC 39867 / T7901).